A 364-amino-acid chain; its full sequence is Phosphoserine aminotransferase (364 aa).

Arginine 40 provides a ligand contact to L-glutamate. Pyridoxal 5'-phosphate is bound by residues 74–75 (GT), tryptophan 100, threonine 149, aspartate 170, and glutamine 193. Residue lysine 194 is modified to N6-(pyridoxal phosphate)lysine. Residue 235–236 (NT) coordinates pyridoxal 5'-phosphate.

Belongs to the class-V pyridoxal-phosphate-dependent aminotransferase family. SerC subfamily. Homodimer. Pyridoxal 5'-phosphate serves as cofactor. In terms of tissue distribution, expressed in ovary and head.

It catalyses the reaction O-phospho-L-serine + 2-oxoglutarate = 3-phosphooxypyruvate + L-glutamate. The enzyme catalyses 4-(phosphooxy)-L-threonine + 2-oxoglutarate = (R)-3-hydroxy-2-oxo-4-phosphooxybutanoate + L-glutamate. The protein operates within amino-acid biosynthesis; L-serine biosynthesis; L-serine from 3-phospho-D-glycerate: step 2/3. Its pathway is cofactor biosynthesis; pyridoxine 5'-phosphate biosynthesis; pyridoxine 5'-phosphate from D-erythrose 4-phosphate: step 3/5. In terms of biological role, catalyzes the reversible conversion of 3-phosphohydroxypyruvate to phosphoserine and of 3-hydroxy-2-oxo-4-phosphonooxybutanoate to phosphohydroxythreonine. This chain is Phosphoserine aminotransferase, found in Drosophila melanogaster (Fruit fly).